The primary structure comprises 574 residues: Sorting nexin-33 (574 aa).

The 61-residue stretch at 1–61 (MALKGRALYD…PASYVEIVRS (61 aa)) folds into the SH3 domain. The segment at 68–119 (ADYSSSPAGSPGAQVSLYNSPSVASPARSGGGSGFLSNQGSFEEDDDDDWDD) is disordered. Phosphoserine is present on residues S77 and S92. Residues 109–119 (FEEDDDDDWDD) are compositionally biased toward acidic residues. Residues 230–340 (FACSVEDPTK…HFLSCLDDKQ (111 aa)) form the PX domain. In terms of domain architecture, BAR spans 371-574 (LQDVEDRVDT…EKTLRMYDNL (204 aa)).

It belongs to the sorting nexin family. As to quaternary structure, homodimer (via BAR domain). Interacts with ADAM15. Interacts with FASLG. Interacts (via SH3 domain) with DNM1 and DNM2. Interacts with WASL. Interacts with FCHSD1 (via the F-BAR domain). Phosphorylated. In terms of tissue distribution, detected in heart and pancreas.

It is found in the cytoplasm. It localises to the cytosol. The protein resides in the membrane. The protein localises to the cytoplasmic vesicle membrane. In terms of biological role, plays a role in the reorganization of the cytoskeleton, endocytosis and cellular vesicle trafficking via its interactions with membranes, WASL, DNM1 and DNM2. Acts both during interphase and at the end of mitotic cell divisions. Required for efficient progress through mitosis and cytokinesis. Required for normal formation of the cleavage furrow at the end of mitosis. Modulates endocytosis of cell-surface proteins, such as APP and PRNP; this then modulates the secretion of APP and PRNP peptides. Promotes membrane tubulation (in vitro). May promote the formation of macropinosomes. In Homo sapiens (Human), this protein is Sorting nexin-33 (SNX33).